The primary structure comprises 367 residues: Riboflavin biosynthesis protein RibD (367 aa).

One can recognise a CMP/dCMP-type deaminase domain in the interval 1-123; the sequence is MQDEYYMARA…RLQQAGIDVS (123 aa). The tract at residues 1 to 145 is deaminase; sequence MQDEYYMARA…KGFLKRMRTG (145 aa). His50 lines the Zn(2+) pocket. Catalysis depends on Glu52, which acts as the Proton donor. Zn(2+) is bound by residues Cys75 and Cys84. The tract at residues 146–367 is reductase; the sequence is FPYIQLKLGA…PDVCLHLVGA (222 aa). Residue 161–164 participates in NADP(+) binding; it reads TAMA. Ser168 lines the substrate pocket. Trp170 provides a ligand contact to NADP(+). Residue Arg184 participates in substrate binding. The NADP(+) site is built by Thr196 and Asp200. Residues Leu204 and Arg207 each contribute to the substrate site. Ser234 lines the NADP(+) pocket. Glu299 contributes to the substrate binding site. NADP(+) is bound at residue 301 to 304; that stretch reads GPTL.

It in the N-terminal section; belongs to the cytidine and deoxycytidylate deaminase family. The protein in the C-terminal section; belongs to the HTP reductase family. Homodimer. The cofactor is Zn(2+).

The enzyme catalyses 2,5-diamino-6-hydroxy-4-(5-phosphoribosylamino)-pyrimidine + H2O + H(+) = 5-amino-6-(5-phospho-D-ribosylamino)uracil + NH4(+). It catalyses the reaction 5-amino-6-(5-phospho-D-ribitylamino)uracil + NADP(+) = 5-amino-6-(5-phospho-D-ribosylamino)uracil + NADPH + H(+). The protein operates within cofactor biosynthesis; riboflavin biosynthesis; 5-amino-6-(D-ribitylamino)uracil from GTP: step 2/4. It participates in cofactor biosynthesis; riboflavin biosynthesis; 5-amino-6-(D-ribitylamino)uracil from GTP: step 3/4. Its function is as follows. Converts 2,5-diamino-6-(ribosylamino)-4(3h)-pyrimidinone 5'-phosphate into 5-amino-6-(ribosylamino)-2,4(1h,3h)-pyrimidinedione 5'-phosphate. The chain is Riboflavin biosynthesis protein RibD (ribD) from Escherichia coli (strain K12).